A 928-amino-acid polypeptide reads, in one-letter code: Inner tegument protein (928 aa).

Residues 482–928 (WGGAVPANLA…LAGLRKLFVE (447 aa)) form an interaction with large tegument protein region.

Belongs to the herpesviridae inner tegument protein family. As to quaternary structure, interacts (via C-terminus) with the large tegument protein/LTP (via N-terminus).

Its subcellular location is the virion tegument. The protein resides in the host cytoplasm. It localises to the host nucleus. The protein localises to the host Golgi apparatus. It is found in the host trans-Golgi network. Its function is as follows. Plays an essential role in cytoplasmic secondary envelopment during viral egress. Interacts with the capsid via the large tegument protein/LTP and participates in its transport to the host trans-Golgi network (TGN) where secondary envelopment occurs. Modulates tegumentation and capsid accumulation at the viral assembly complex. This Homo sapiens (Human) protein is Inner tegument protein (ORF63).